Here is a 64-residue protein sequence, read N- to C-terminus: Large ribosomal subunit protein bL35 (64 aa).

A disordered region spans residues 1–43; sequence MPKMKSKKSLAKRVIAKKNGTLKRGKAYRSHRATGKTTKQKRH.

It belongs to the bacterial ribosomal protein bL35 family.

The sequence is that of Large ribosomal subunit protein bL35 from Mesoplasma florum (strain ATCC 33453 / NBRC 100688 / NCTC 11704 / L1) (Acholeplasma florum).